The chain runs to 195 residues: Probable DNA-directed RNA polymerase subunit delta (195 aa).

An HTH HARE-type domain is found at 14–83 (LSMIEVARAI…GDNKWGLRSW (70 aa)). 2 stretches are compositionally biased toward acidic residues: residues 119–138 (GDED…DSYE) and 145–195 (YDDE…GEEE). Positions 119 to 195 (GDEDAIDYSD…SDDDAEGEEE (77 aa)) are disordered.

It belongs to the RpoE family. As to quaternary structure, RNAP is composed of a core of 2 alpha, a beta and a beta' subunits. The core is associated with a delta subunit and one of several sigma factors.

Its function is as follows. Participates in both the initiation and recycling phases of transcription. In the presence of the delta subunit, RNAP displays an increased specificity of transcription, a decreased affinity for nucleic acids, and an increased efficiency of RNA synthesis because of enhanced recycling. This Streptococcus gordonii (strain Challis / ATCC 35105 / BCRC 15272 / CH1 / DL1 / V288) protein is Probable DNA-directed RNA polymerase subunit delta.